We begin with the raw amino-acid sequence, 194 residues long: dCTP deaminase (194 aa).

DCTP-binding positions include 110-115, D128, 136-138, Y171, K178, and Q182; these read RSSLAR and VLE. Catalysis depends on E138, which acts as the Proton donor/acceptor. Residues 172 to 194 form a disordered region; it reads NKRKSAKYRDQQEAVASRISQDK.

It belongs to the dCTP deaminase family. Homotrimer.

It catalyses the reaction dCTP + H2O + H(+) = dUTP + NH4(+). It functions in the pathway pyrimidine metabolism; dUMP biosynthesis; dUMP from dCTP (dUTP route): step 1/2. In terms of biological role, catalyzes the deamination of dCTP to dUTP. The sequence is that of dCTP deaminase from Shewanella loihica (strain ATCC BAA-1088 / PV-4).